We begin with the raw amino-acid sequence, 266 residues long: Beta-lactamase OXA-20 (266 aa).

An N-terminal signal peptide occupies residues M1–A21. The active-site Acyl-ester intermediate is the S72. K75 carries the N6-carboxylysine modification. K210–G212 contributes to the substrate binding site.

Belongs to the class-D beta-lactamase family.

It catalyses the reaction a beta-lactam + H2O = a substituted beta-amino acid. Inhibited by clavulanic acid. Its function is as follows. This is an oxacillin-hydrolyzing beta-lactamase. The chain is Beta-lactamase OXA-20 (bla) from Pseudomonas aeruginosa.